Reading from the N-terminus, the 492-residue chain is 6-phosphogluconate dehydrogenase, decarboxylating (492 aa).

NADP(+)-binding positions include 13-18, 36-38, 78-80, and N106; these read GLAVMG, NRT, and VKA. Position 106 (N106) interacts with substrate. Position 107 is a phosphoserine (S107). A substrate-binding site is contributed by 132–134; sequence SGG. K187 serves as the catalytic Proton acceptor. Substrate is bound at residue 190–191; the sequence is HN. Residue E194 is the Proton donor of the active site. Y195 contacts substrate. The residue at position 215 (S215) is a Phosphoserine. Residues K264, R291, R449, and H455 each contribute to the substrate site.

It belongs to the 6-phosphogluconate dehydrogenase family. In terms of assembly, homodimer.

The catalysed reaction is 6-phospho-D-gluconate + NADP(+) = D-ribulose 5-phosphate + CO2 + NADPH. Its pathway is carbohydrate degradation; pentose phosphate pathway; D-ribulose 5-phosphate from D-glucose 6-phosphate (oxidative stage): step 3/3. Functionally, catalyzes the oxidative decarboxylation of 6-phosphogluconate to ribulose 5-phosphate and CO(2), with concomitant reduction of NADP to NADPH. This Schizosaccharomyces pombe (strain 972 / ATCC 24843) (Fission yeast) protein is 6-phosphogluconate dehydrogenase, decarboxylating.